The following is an 883-amino-acid chain: EEF1AKMT4-ECE2 readthrough transcript protein (883 aa).

A methyltransferase-like region region spans residues M1–E160. The Cytoplasmic portion of the chain corresponds to M1–E178. The S-adenosyl-L-methionine site is built by W26 and Y30. Residue Y39 is modified to Phosphotyrosine. Residues W41, G66, D88–Y89, D113–V114, and K130 each bind S-adenosyl-L-methionine. Residues L179 to L199 form a helical membrane-spanning segment. At G200–W883 the chain is on the lumenal side. The region spanning T211–W883 is the Peptidase M13 domain. 5 disulfide bridges follow: C212–C217, C235–C868, C243–C828, C299–C548, and C757–C880. Residues N279, N283, N324, N384, N429, N496, and N652 are each glycosylated (N-linked (GlcNAc...) asparagine). A Zn(2+)-binding site is contributed by H720. Residue E721 is part of the active site. Position 724 (H724) interacts with Zn(2+). Residues N745 and N753 are each glycosylated (N-linked (GlcNAc...) asparagine). Residue E780 coordinates Zn(2+). The active-site Proton donor is the D784.

It in the N-terminal section; belongs to the methyltransferase superfamily. This sequence in the C-terminal section; belongs to the peptidase M13 family. Zn(2+) serves as cofactor.

The protein localises to the golgi apparatus membrane. The protein resides in the cytoplasmic vesicle. It is found in the secretory vesicle membrane. It catalyses the reaction Hydrolysis of the 21-Trp-|-Val-22 bond in big endothelin to form endothelin 1.. Inhibited by phosphoramidon. Converts big endothelin-1 to endothelin-1. May also have methyltransferase activity. May play a role in amyloid-beta processing. The polypeptide is EEF1AKMT4-ECE2 readthrough transcript protein (Homo sapiens (Human)).